Consider the following 742-residue polypeptide: Zinc finger MYND domain-containing protein 15 (742 aa).

The segment at 109–199 is disordered; that stretch reads LEDGEEGEEE…QKRKGQRSEA (91 aa). Residues 110-127 show a composition bias toward acidic residues; it reads EDGEEGEEEEEEDEEEEK. The segment covering 151 to 161 has biased composition (polar residues); it reads SRESPQETNPP. Over residues 166 to 189 the composition is skewed to basic and acidic residues; the sequence is EAAREAGGGKDGCREDRVENETRP. C313, C316, C328, C331, C337, C341, H355, and C359 together coordinate Zn(2+). An MYND-type zinc finger spans residues 313 to 359; the sequence is CHVCHRHSFEAKLTPCPQCSAVLYCGEACLRADWQRCPDDVSHRFWC. Disordered stretches follow at residues 565–590 and 701–742; these read EVSVRPGSGISARPSSGTKEKGGRRD and QGSG…RRRK. Residues 708–724 show a composition bias toward pro residues; it reads APGPPPPSPTPSAPPAP. Over residues 725–742 the composition is skewed to basic residues; the sequence is TRRRRGEKKPGRGARRRK.

Interacts with HDAC1, HDAC3, HDAC6 and, to a lesser extent, with HDAC7.

The protein localises to the nucleus. The protein resides in the cytoplasm. Acts as a transcriptional repressor through interaction with histone deacetylases (HDACs). May be important for spermiogenesis. The sequence is that of Zinc finger MYND domain-containing protein 15 (ZMYND15) from Homo sapiens (Human).